Here is a 23-residue protein sequence, read N- to C-terminus: Benzaldehyde dehydrogenase [NAD(+)] I (23 aa).

The protein belongs to the aldehyde dehydrogenase family. Homotetramer.

It carries out the reaction benzaldehyde + NAD(+) + H2O = benzoate + NADH + 2 H(+). The chain is Benzaldehyde dehydrogenase [NAD(+)] I from Acinetobacter guillouiae (Acinetobacter genomosp. 11).